The chain runs to 234 residues: Phosphoribosylaminoimidazole-succinocarboxamide synthase (234 aa).

Belongs to the SAICAR synthetase family.

The catalysed reaction is 5-amino-1-(5-phospho-D-ribosyl)imidazole-4-carboxylate + L-aspartate + ATP = (2S)-2-[5-amino-1-(5-phospho-beta-D-ribosyl)imidazole-4-carboxamido]succinate + ADP + phosphate + 2 H(+). The protein operates within purine metabolism; IMP biosynthesis via de novo pathway; 5-amino-1-(5-phospho-D-ribosyl)imidazole-4-carboxamide from 5-amino-1-(5-phospho-D-ribosyl)imidazole-4-carboxylate: step 1/2. The protein is Phosphoribosylaminoimidazole-succinocarboxamide synthase of Clostridium botulinum (strain ATCC 19397 / Type A).